The chain runs to 310 residues: Ribosomal RNA small subunit methyltransferase H (310 aa).

S-adenosyl-L-methionine is bound by residues 32-34, D52, F79, D100, and Q107; that span reads GGH.

It belongs to the methyltransferase superfamily. RsmH family.

The protein localises to the cytoplasm. It carries out the reaction cytidine(1402) in 16S rRNA + S-adenosyl-L-methionine = N(4)-methylcytidine(1402) in 16S rRNA + S-adenosyl-L-homocysteine + H(+). Its function is as follows. Specifically methylates the N4 position of cytidine in position 1402 (C1402) of 16S rRNA. The sequence is that of Ribosomal RNA small subunit methyltransferase H from Geobacillus thermodenitrificans (strain NG80-2).